The following is a 217-amino-acid chain: Phosphatidylserine decarboxylase proenzyme (217 aa).

The active-site Schiff-base intermediate with substrate; via pyruvic acid is the S187. Position 187 is a pyruvic acid (Ser); by autocatalysis (S187).

The protein belongs to the phosphatidylserine decarboxylase family. PSD-A subfamily. In terms of assembly, heterodimer of a large membrane-associated beta subunit and a small pyruvoyl-containing alpha subunit. The cofactor is pyruvate. In terms of processing, is synthesized initially as an inactive proenzyme. Formation of the active enzyme involves a self-maturation process in which the active site pyruvoyl group is generated from an internal serine residue via an autocatalytic post-translational modification. Two non-identical subunits are generated from the proenzyme in this reaction, and the pyruvate is formed at the N-terminus of the alpha chain, which is derived from the carboxyl end of the proenzyme. The post-translation cleavage follows an unusual pathway, termed non-hydrolytic serinolysis, in which the side chain hydroxyl group of the serine supplies its oxygen atom to form the C-terminus of the beta chain, while the remainder of the serine residue undergoes an oxidative deamination to produce ammonia and the pyruvoyl prosthetic group on the alpha chain.

Its subcellular location is the cell membrane. It catalyses the reaction a 1,2-diacyl-sn-glycero-3-phospho-L-serine + H(+) = a 1,2-diacyl-sn-glycero-3-phosphoethanolamine + CO2. Its pathway is phospholipid metabolism; phosphatidylethanolamine biosynthesis; phosphatidylethanolamine from CDP-diacylglycerol: step 2/2. In terms of biological role, catalyzes the formation of phosphatidylethanolamine (PtdEtn) from phosphatidylserine (PtdSer). The polypeptide is Phosphatidylserine decarboxylase proenzyme (Thermobifida fusca (strain YX)).